The primary structure comprises 439 residues: Histidinol dehydrogenase (439 aa).

Tyrosine 132, glutamine 194, and asparagine 217 together coordinate NAD(+). Substrate is bound by residues serine 244, glutamine 266, and histidine 269. Zn(2+) contacts are provided by glutamine 266 and histidine 269. Active-site proton acceptor residues include glutamate 335 and histidine 336. Positions 336, 369, 423, and 428 each coordinate substrate. Aspartate 369 contributes to the Zn(2+) binding site. Residue histidine 428 participates in Zn(2+) binding.

Belongs to the histidinol dehydrogenase family. It depends on Zn(2+) as a cofactor.

It carries out the reaction L-histidinol + 2 NAD(+) + H2O = L-histidine + 2 NADH + 3 H(+). Its pathway is amino-acid biosynthesis; L-histidine biosynthesis; L-histidine from 5-phospho-alpha-D-ribose 1-diphosphate: step 9/9. Catalyzes the sequential NAD-dependent oxidations of L-histidinol to L-histidinaldehyde and then to L-histidine. This Schizosaccharomyces pombe (strain 972 / ATCC 24843) (Fission yeast) protein is Histidinol dehydrogenase (his2).